The primary structure comprises 451 residues: tRNA modification GTPase MnmE (451 aa).

3 residues coordinate (6S)-5-formyl-5,6,7,8-tetrahydrofolate: Arg23, Glu80, and Lys119. The 158-residue stretch at 215–372 (GIKVVLAGQP…LRAALLKTAG (158 aa)) folds into the TrmE-type G domain. Position 225 (Asn225) interacts with K(+). GTP-binding positions include 225-230 (NVGKSS), 244-250 (TDIPGTT), and 269-272 (DTAG). Ser229 is a binding site for Mg(2+). Positions 244, 246, and 249 each coordinate K(+). Residue Thr250 coordinates Mg(2+). Lys451 serves as a coordination point for (6S)-5-formyl-5,6,7,8-tetrahydrofolate.

It belongs to the TRAFAC class TrmE-Era-EngA-EngB-Septin-like GTPase superfamily. TrmE GTPase family. Homodimer. Heterotetramer of two MnmE and two MnmG subunits. K(+) is required as a cofactor.

It localises to the cytoplasm. Exhibits a very high intrinsic GTPase hydrolysis rate. Involved in the addition of a carboxymethylaminomethyl (cmnm) group at the wobble position (U34) of certain tRNAs, forming tRNA-cmnm(5)s(2)U34. This Nitrosomonas europaea (strain ATCC 19718 / CIP 103999 / KCTC 2705 / NBRC 14298) protein is tRNA modification GTPase MnmE.